Here is an 88-residue protein sequence, read N- to C-terminus: UPF0250 protein Ssed_3490 (88 aa).

Belongs to the UPF0250 family.

In Shewanella sediminis (strain HAW-EB3), this protein is UPF0250 protein Ssed_3490.